The sequence spans 147 residues: Large ribosomal subunit protein bL9 (147 aa).

Belongs to the bacterial ribosomal protein bL9 family.

Its function is as follows. Binds to the 23S rRNA. The polypeptide is Large ribosomal subunit protein bL9 (Sulfurovum sp. (strain NBC37-1)).